The chain runs to 842 residues: Alanine--tRNA ligase (842 aa).

Positions 549, 553, 650, and 654 each coordinate Zn(2+).

Belongs to the class-II aminoacyl-tRNA synthetase family. Requires Zn(2+) as cofactor.

It is found in the cytoplasm. The enzyme catalyses tRNA(Ala) + L-alanine + ATP = L-alanyl-tRNA(Ala) + AMP + diphosphate. Its function is as follows. Catalyzes the attachment of alanine to tRNA(Ala) in a two-step reaction: alanine is first activated by ATP to form Ala-AMP and then transferred to the acceptor end of tRNA(Ala). Also edits incorrectly charged Ser-tRNA(Ala) and Gly-tRNA(Ala) via its editing domain. The sequence is that of Alanine--tRNA ligase from Campylobacter jejuni subsp. jejuni serotype O:23/36 (strain 81-176).